We begin with the raw amino-acid sequence, 706 residues long: Gamma-adducin (706 aa).

Residues 1–11 (MSSDTSPAVVT) show a composition bias toward low complexity. The segment at 1–23 (MSSDTSPAVVTTPPPPSMPHKER) is disordered. Serine 2 carries the post-translational modification N-acetylserine. Phosphoserine is present on residues serine 31, serine 42, serine 64, serine 402, serine 414, serine 423, serine 442, and serine 461. 4 disordered regions span residues 471–495 (AEDS…VPLN), 534–556 (PPST…PFSH), 574–610 (QGLD…RLEE), and 651–706 (TSTT…KVEA). A Glycyl lysine isopeptide (Lys-Gly) (interchain with G-Cter in SUMO2) cross-link involves residue lysine 484. Residues serine 583, serine 585, and serine 590 each carry the phosphoserine modification. Composition is skewed to low complexity over residues 590-605 (SVSQ…QSVP) and 651-662 (TSTTIENIEITI). Phosphoserine is present on residues serine 673, serine 677, serine 679, serine 681, and serine 683. Basic residues predominate over residues 682-706 (PSKKKKKFRTPSFLKKNKKKEKVEA). Residues 684–701 (KKKKKFRTPSFLKKNKKK) are interaction with calmodulin.

It belongs to the aldolase class II family. Adducin subfamily. As to quaternary structure, heterodimer of an alpha and a gamma subunit. In terms of processing, sumoylated. Proteolytically cleaved by asparagine endopeptidase (AEP) into 2 fragments. Overexpression of the 1-357 fragment induces neuronal apoptosis, and overexpression of either 1-357 or 358-706 fragment increases the degeneration of dendritic spines. Overexpression of the 1-357 fragment impairs neurite outgrowth by downregulating the expression of Rac2, and induces synaptic dysfunction and cognitive impairments in tau P301S transgenic mice, a mouse model for Alzheimer disease (AD). Cleavage fragment 1-357 is expressed in the brain and the expression increases with age (at protein level). The fragment is expressed in the cortex, hippocampal CA1 region and hippocampal dentate gyrus in tau P301S transgenic mice, a mouse model for Alzheimer disease (AD) (at protein level). The fragment is only weakly expressed in non-transgenic mouse brain sections (at protein level).

Its subcellular location is the cytoplasm. The protein localises to the cytoskeleton. It localises to the cell membrane. Membrane-cytoskeleton-associated protein that promotes the assembly of the spectrin-actin network. Plays a role in actin filament capping. Binds to calmodulin. Involved in myogenic reactivity of the renal afferent arteriole (Af-art), renal interlobular arteries and middle cerebral artery (MCA) to increased perfusion pressure. Involved in regulation of potassium channels in the vascular smooth muscle cells (VSMCs) of the Af-art and MCA ex vivo. Involved in regulation of glomerular capillary pressure, glomerular filtration rate (GFR) and glomerular nephrin expression in response to hypertension. Involved in renal blood flow (RBF) autoregulation. Plays a role in podocyte structure and function. Regulates globular monomer actin (G-actin) and filamentous polymer actin (F-actin) ratios in the primary podocytes affecting actin cytoskeleton organization. Regulates expression of synaptopodin, RhoA, Rac1 and CDC42 in the renal cortex and the primary podocytes. Regulates expression of nephrin in the glomeruli and in the primary podocytes, expression of nephrin and podocinin in the renal cortex, and expression of focal adhesion proteins integrin alpha-3 and integrin beta-1 in the glomeruli. Involved in cell migration and cell adhesion of podocytes, and in podocyte foot process effacement. Regulates expression of profibrotics markers MMP2, MMP9, TGF beta-1, tubular tight junction protein E-cadherin, and mesenchymal markers vimentin and alpha-SMA. Promotes the growth of neurites. This chain is Gamma-adducin (Add3), found in Mus musculus (Mouse).